Reading from the N-terminus, the 435-residue chain is Phosphomethylpyrimidine synthase (435 aa).

Substrate contacts are provided by residues Asn67, Met96, Tyr125, His163, 185–187 (SRG), 226–229 (DGLR), and Glu265. Zn(2+) is bound at residue His269. Tyr292 provides a ligand contact to substrate. Residue His333 coordinates Zn(2+). Positions 408, 411, and 415 each coordinate [4Fe-4S] cluster.

It belongs to the ThiC family. Requires [4Fe-4S] cluster as cofactor.

The catalysed reaction is 5-amino-1-(5-phospho-beta-D-ribosyl)imidazole + S-adenosyl-L-methionine = 4-amino-2-methyl-5-(phosphooxymethyl)pyrimidine + CO + 5'-deoxyadenosine + formate + L-methionine + 3 H(+). The protein operates within cofactor biosynthesis; thiamine diphosphate biosynthesis. Its function is as follows. Catalyzes the synthesis of the hydroxymethylpyrimidine phosphate (HMP-P) moiety of thiamine from aminoimidazole ribotide (AIR) in a radical S-adenosyl-L-methionine (SAM)-dependent reaction. This chain is Phosphomethylpyrimidine synthase, found in Thermus thermophilus (strain ATCC 27634 / DSM 579 / HB8).